A 164-amino-acid chain; its full sequence is Envelope glycoprotein L (164 aa).

A signal peptide spans 1-24; sequence MRSLDRYAIFILLACGLLWRPCLS.

This sequence belongs to the herpesviridae glycoprotein L family. As to quaternary structure, interacts with glycoprotein H (gH); this interaction is necessary for the correct processing and cell surface expression of gH. The heterodimer gH/gL seems to interact with gB trimers during fusion.

It is found in the virion membrane. The protein resides in the host cell membrane. It localises to the host Golgi apparatus. The protein localises to the host trans-Golgi network. In terms of biological role, the heterodimer glycoprotein H-glycoprotein L is required for the fusion of viral and plasma membranes leading to virus entry into the host cell. Acts as a functional inhibitor of gH and maintains gH in an inhibited form. Upon binding to host integrins, gL dissociates from gH leading to activation of the viral fusion glycoproteins gB and gH. This is Envelope glycoprotein L from Equine herpesvirus 2 (strain 86/87) (EHV-2).